The chain runs to 402 residues: Protein indeterminate-domain 12 (402 aa).

The interval 47–66 is disordered; sequence TETHKPKKKRGLPGNPDPDA. Ser72 is subject to Phosphoserine. C2H2-type zinc fingers lie at residues 82 to 104 and 124 to 154; these read FVCE…RRGH and YVCP…CRKH. The Nuclear localization signal motif lies at 146-153; the sequence is IKKHFCRK. The C2H2-type 2; degenerate zinc finger occupies 159–183; the sequence is WKCEKCSKFYAVQSDWKAHTKICGT. Residues Cys161, Cys164, His177, Cys181, Cys188, Cys190, His203, and Cys207 each contribute to the Zn(2+) site. A CCHC-type 2; atypical zinc finger spans residues 186–209; sequence YRCDCGTLFSRKDTFITHRAFCDA. The interval 196–208 is SHR-binding; that stretch reads RKDTFITHRAFCD.

It is found in the nucleus. Its function is as follows. Probable transcription factor. This chain is Protein indeterminate-domain 12, found in Arabidopsis thaliana (Mouse-ear cress).